A 357-amino-acid chain; its full sequence is Membrane-bound lytic murein transglycosylase C (357 aa).

Residues 1-15 form the signal peptide; the sequence is MKKYLLLALLPFLYA. Residue cysteine 16 is the site of N-palmitoyl cysteine attachment. The S-diacylglycerol cysteine moiety is linked to residue cysteine 16.

It belongs to the transglycosylase Slt family.

The protein localises to the cell outer membrane. The enzyme catalyses Exolytic cleavage of the (1-&gt;4)-beta-glycosidic linkage between N-acetylmuramic acid (MurNAc) and N-acetylglucosamine (GlcNAc) residues in peptidoglycan, from either the reducing or the non-reducing ends of the peptidoglycan chains, with concomitant formation of a 1,6-anhydrobond in the MurNAc residue.. Murein-degrading enzyme. May play a role in recycling of muropeptides during cell elongation and/or cell division. This is Membrane-bound lytic murein transglycosylase C from Haemophilus influenzae (strain 86-028NP).